Reading from the N-terminus, the 391-residue chain is Casein kinase II subunit alpha 3 (391 aa).

The Protein kinase domain maps to 39–324; that stretch reads YQLVRKLGRG…AREAMEHPYF (286 aa). ATP contacts are provided by residues 45–53 and Lys68; that span reads LGRGKYSEV. Asp156 serves as the catalytic Proton acceptor.

It belongs to the protein kinase superfamily. Ser/Thr protein kinase family. CK2 subfamily. Heterotetramer composed of two catalytic subunits (alpha chain and/or alpha' chain) and two regulatory subunits (beta chains). Interacts with PML. In terms of tissue distribution, detected in blood platelets and megakaryocyte cell lines. Poorly expressed in lung. Highly expressed in lung tumor tissues.

The catalysed reaction is L-seryl-[protein] + ATP = O-phospho-L-seryl-[protein] + ADP + H(+). The enzyme catalyses L-threonyl-[protein] + ATP = O-phospho-L-threonyl-[protein] + ADP + H(+). Functionally, probable catalytic subunit of a constitutively active serine/threonine-protein kinase complex that phosphorylates a large number of substrates containing acidic residues C-terminal to the phosphorylated serine or threonine. Amplification-dependent oncogene; promotes cell proliferation and tumorigenesis by down-regulating expression of the tumor suppressor protein, PML. May play a role in the pathogenesis of the lung cancer development and progression. In Homo sapiens (Human), this protein is Casein kinase II subunit alpha 3 (CSNK2A3).